The following is a 296-amino-acid chain: Probable endonuclease 4 (296 aa).

The Zn(2+) site is built by His68, His109, Glu144, Asp178, His181, His213, Asp226, His228, and Glu258.

Belongs to the AP endonuclease 2 family. Zn(2+) serves as cofactor.

The enzyme catalyses Endonucleolytic cleavage to 5'-phosphooligonucleotide end-products.. Its function is as follows. Endonuclease IV plays a role in DNA repair. It cleaves phosphodiester bonds at apurinic or apyrimidinic (AP) sites, generating a 3'-hydroxyl group and a 5'-terminal sugar phosphate. The sequence is that of Probable endonuclease 4 from Pediococcus pentosaceus (strain ATCC 25745 / CCUG 21536 / LMG 10740 / 183-1w).